Consider the following 258-residue polypeptide: 3-deoxy-manno-octulosonate cytidylyltransferase (258 aa).

It belongs to the KdsB family.

It is found in the cytoplasm. It carries out the reaction 3-deoxy-alpha-D-manno-oct-2-ulosonate + CTP = CMP-3-deoxy-beta-D-manno-octulosonate + diphosphate. The protein operates within nucleotide-sugar biosynthesis; CMP-3-deoxy-D-manno-octulosonate biosynthesis; CMP-3-deoxy-D-manno-octulosonate from 3-deoxy-D-manno-octulosonate and CTP: step 1/1. It participates in bacterial outer membrane biogenesis; lipopolysaccharide biosynthesis. Activates KDO (a required 8-carbon sugar) for incorporation into bacterial lipopolysaccharide in Gram-negative bacteria. The polypeptide is 3-deoxy-manno-octulosonate cytidylyltransferase (Nitrobacter hamburgensis (strain DSM 10229 / NCIMB 13809 / X14)).